The primary structure comprises 655 residues: WD repeat-containing protein 70 (655 aa).

2 disordered regions span residues 1-24 (MEHSGPSEVTGADTAGPDPQLAVT) and 43-170 (FEQT…PIHR). Positions 45–78 (QTRRTAVERSRKTLEAREKEEEMNREKELRKQLE) are enriched in basic and acidic residues. Residues 99–112 (RDTSSSDSDHSSGS) are compositionally biased toward low complexity. Over residues 148–165 (EEGEDDDDDDLEDEGEED) the composition is skewed to acidic residues. WD repeat units follow at residues 181–220 (HGTKTVSALGLDPSGARLVTGGYDYDVKFWDFAGMDASFK), 228–269 (CECH…ECIK), 282–322 (GHTA…KQKS), 331–370 (GKKVIPTTCTYSRDGNLVAAACQNGSIQIWDRNLTVHPKF), 377–416 (APGTDTSCVAFSYDGNVLASRGGDDTLKLWDVRQFNKPLF), 422–467 (PTLF…RVYE), and 470–509 (ITDASVVRCLWHPKLNQIMVGTGNGLAKVYYDPNKSQRGA). Lys297 participates in a covalent cross-link: Glycyl lysine isopeptide (Lys-Gly) (interchain with G-Cter in SUMO2). At Lys453 the chain carries N6-acetyllysine. The span at 541 to 566 (REPRQRSTRKQLEKDRLDPLKSHKPE) shows a compositional bias: basic and acidic residues. The segment at 541 to 582 (REPRQRSTRKQLEKDRLDPLKSHKPEPPVAGPGRGGRVGTHG) is disordered. Gly residues predominate over residues 572 to 582 (PGRGGRVGTHG). A Phosphothreonine modification is found at Thr580. Glycyl lysine isopeptide (Lys-Gly) (interchain with G-Cter in SUMO2) cross-links involve residues Lys591 and Lys597. Ser622 and Ser639 each carry phosphoserine. The disordered stretch occupies residues 632–655 (TMFAQVESDDEESKNEPEWKKRKI). A compositionally biased stretch (basic and acidic residues) spans 645–655 (KNEPEWKKRKI).

It belongs to the WD repeat GAD-1 family.

In Rattus norvegicus (Rat), this protein is WD repeat-containing protein 70 (Wdr70).